We begin with the raw amino-acid sequence, 119 residues long: UPF0292 protein TV1259 (119 aa).

Residues 11–93 (SIPIIVEGRN…YVDLYLWNFI (83 aa)) enclose the Toprim domain. Mg(2+) contacts are provided by Glu17, Asp62, and Asp64.

Belongs to the UPF0292 family. The cofactor is Mg(2+).

This Thermoplasma volcanium (strain ATCC 51530 / DSM 4299 / JCM 9571 / NBRC 15438 / GSS1) protein is UPF0292 protein TV1259.